The sequence spans 514 residues: Glucose-6-phosphate 1-dehydrogenase 2 (514 aa).

Residues arginine 69 and lysine 176 each contribute to the NADP(+) site. The substrate site is built by histidine 206, lysine 210, glutamate 244, and aspartate 263. Histidine 268 functions as the Proton acceptor in the catalytic mechanism. Residue lysine 366 coordinates substrate.

It belongs to the glucose-6-phosphate dehydrogenase family.

It catalyses the reaction D-glucose 6-phosphate + NADP(+) = 6-phospho-D-glucono-1,5-lactone + NADPH + H(+). It participates in carbohydrate degradation; pentose phosphate pathway; D-ribulose 5-phosphate from D-glucose 6-phosphate (oxidative stage): step 1/3. Its function is as follows. Catalyzes the oxidation of glucose 6-phosphate to 6-phosphogluconolactone. The chain is Glucose-6-phosphate 1-dehydrogenase 2 from Mycobacterium bovis (strain ATCC BAA-935 / AF2122/97).